A 355-amino-acid polypeptide reads, in one-letter code: Guanine nucleotide-binding protein G(i) subunit alpha-2 (355 aa).

Glycine 2 carries N-myristoyl glycine lipidation. The S-palmitoyl cysteine moiety is linked to residue cysteine 3. In terms of domain architecture, G-alpha spans 32–355 (REVKLLLLGA…KNNLKDCGLF (324 aa)). The tract at residues 35–48 (KLLLLGAGESGKST) is G1 motif. GTP is bound by residues 40–47 (GAGESGKS), 176–182 (LRTRVKT), 201–205 (DVGGQ), 270–273 (NKKD), and alanine 327. Mg(2+) contacts are provided by serine 47 and threonine 182. The segment at 174-182 (DVLRTRVKT) is G2 motif. Residues 197–206 (FKMFDVGGQR) form a G3 motif region. The interval 266–273 (ILFLNKKD) is G4 motif. The segment at 325–330 (TCATDT) is G5 motif.

It belongs to the G-alpha family. G(i/o/t/z) subfamily. G proteins are composed of 3 units; alpha, beta and gamma. The alpha chain contains the guanine nucleotide binding site. In this context, interacts with GNB2. Interacts with UNC5B. Interacts with GPSM1. Interacts with RGS12 and RGS14. Interacts (inactive GDP-bound form) with NUCB1 (via GBA motif); the interaction leads to activation of GNAI3. Interacts (inactive GDP-bound form) with CCDC88C/DAPLE (via GBA motif). Interacts (inactive GDP-bound form) with CCDC8A/GIV (via GBA motif). Interacts with CXCR1 and CXCR2.

The protein resides in the cytoplasm. The protein localises to the cytoskeleton. Its subcellular location is the microtubule organizing center. It is found in the centrosome. It localises to the cell membrane. The protein resides in the membrane. Functionally, guanine nucleotide-binding proteins (G proteins) are involved as modulators or transducers in various transmembrane signaling systems. The G(i) proteins are involved in hormonal regulation of adenylate cyclase: they inhibit the cyclase in response to beta-adrenergic stimuli. May play a role in cell division. The protein is Guanine nucleotide-binding protein G(i) subunit alpha-2 (Gnai2) of Mus musculus (Mouse).